Consider the following 265-residue polypeptide: 3-methyl-2-oxobutanoate hydroxymethyltransferase (265 aa).

Mg(2+) is bound by residues Asp44 and Asp83. Residues 44–45 (DS), Asp83, and Lys113 contribute to the 3-methyl-2-oxobutanoate site. A Mg(2+)-binding site is contributed by Glu115. Glu183 serves as the catalytic Proton acceptor.

Belongs to the PanB family. Homodecamer; pentamer of dimers. Requires Mg(2+) as cofactor.

The protein localises to the cytoplasm. The catalysed reaction is 3-methyl-2-oxobutanoate + (6R)-5,10-methylene-5,6,7,8-tetrahydrofolate + H2O = 2-dehydropantoate + (6S)-5,6,7,8-tetrahydrofolate. It participates in cofactor biosynthesis; (R)-pantothenate biosynthesis; (R)-pantoate from 3-methyl-2-oxobutanoate: step 1/2. In terms of biological role, catalyzes the reversible reaction in which hydroxymethyl group from 5,10-methylenetetrahydrofolate is transferred onto alpha-ketoisovalerate to form ketopantoate. In Leptospira borgpetersenii serovar Hardjo-bovis (strain JB197), this protein is 3-methyl-2-oxobutanoate hydroxymethyltransferase.